The following is a 660-amino-acid chain: DNA polymerase alpha-associated DNA helicase A (660 aa).

232 to 239 (GPPGTGKT) serves as a coordination point for ATP.

The protein belongs to the DNA2/NAM7 helicase family. Associates with the hexameric DNA polymerase alpha.

It is found in the cytoplasm. The protein resides in the nucleus. It carries out the reaction ATP + H2O = ADP + phosphate + H(+). Functionally, DNA polymerase alpha-associated DNA helicase which may be involved in DNA replication. In Schizosaccharomyces pombe (strain 972 / ATCC 24843) (Fission yeast), this protein is DNA polymerase alpha-associated DNA helicase A (hcs1).